The following is a 219-amino-acid chain: Probable GTP-binding protein EngB (219 aa).

One can recognise an EngB-type G domain in the interval 42–219; sequence SVPEIAFAGR…RTAVLEAVEL (178 aa). GTP-binding positions include 50-57, 77-81, 97-100, 164-167, and 198-200; these read GRSNVGKS, GRTQE, DMPG, TKAD, and TSS. Residues Ser-57 and Thr-79 each contribute to the Mg(2+) site.

This sequence belongs to the TRAFAC class TrmE-Era-EngA-EngB-Septin-like GTPase superfamily. EngB GTPase family. Mg(2+) is required as a cofactor.

Functionally, necessary for normal cell division and for the maintenance of normal septation. The polypeptide is Probable GTP-binding protein EngB (Sphingopyxis alaskensis (strain DSM 13593 / LMG 18877 / RB2256) (Sphingomonas alaskensis)).